A 1638-amino-acid polypeptide reads, in one-letter code: MEAKPVPAPQPRPRAMAEPLHIQRLEAALNMRPFMNMAKRSLRKPLSSDEETDDEHVVKREHDVQDSDDSSTVGVVRMKQSSKRKSRLLASKEERQSVKAQLYNFNDLTSDREWLYDLLLSDTESDDPTITEDEYVQQLLREHVREQRQRKNYYKKAANAQYAYYGSGLLSNHDIFAERQLATAGVRKRRRRTKQEILMARLAEAQAGPKPPKQRRRGRKKRDNMGSPESGEVPPSELGKYTFGDTLPNNEDDDEDGGEVDYKRELASLALDYPEEEEIEEEVDVEGGTEGQVTKVRRKRKNPAALAARRRRIWQIMSKKESGRLQRIKSNNHKEMLANCKRVAGMCAKVVRQRAINSQRIMKETVWRAKRLTREMLAYWKRYERVERDQRRKQEREAEEQRKQDVELIEVKRQQRKLNFLITQTELYAHFMSKKLGQGSEEDQLRILSQLDEETNARLAAQDDYDAGEMKLLAQENAEAAMQRDLDKTRAFDVFAKKKEKEEEEQAQESVEDIKPEPRPEMKDLPQPKMFKGTLKGYQIKGMTWLANIYDQGISGILADEMGLGKTVQSIAFLCHIAEHYGVWGPFLVISPASTLHNWQQEMSRFVPDFKVVPYWGSPAERKILRQFWDQKHLHTRDASFHVVITSYQLVVSDYKYFNRIKWQYMVLDEAQAIKSAASQRWKLLLGFSCRNRLLLSGTPIQNSMAELWALLHFIMPTLFDSHDEFNEWFSKDIESHAENKTGIDEKQISRLHMILKPFMLRRIKKDVENELSDKIEIMVYCPLTIRQKLLYRALKQKIRIEDLLHLTSGSTTTSSSSSASNLMNLVMQFRKVCNHPELFERRDARSPFFMRCAEYTIPRLIHEEGLIHRMLPSRKHLLYNRFNIFKSEYIQRSLFEDVNVNSCFGFTRLCDLSVGDMVEVTLNGLIDFLLHYRRVLEKYPLLAYRRFWWKKQPDSRYQLLEPMLENKLALDYMPPNSVLKNFIFTAMTANESSVYAFGDYFTYNMQETIEHRVIRSKILKKKTSLIEEMEDVSKQKLEIESVEVQTKSNAKSDVKVTTLLLLPEFPHRPRKPRKYVCEPLSMPRILYDLGQKVQAVHRYLYCDSRSAAWSQIRHNQCENSQGRELVSSGLALCKPHGGWSSIVVPDKETLITDAGKLFVLDNLLTRLKANGHRVLIYSQMTKMIDLLEEYMWHRKHRYMRLDGSSKISARRDMVADFQTRADIFVFLLSTRAGGLGINLTAADTVIFYDSDWNPTVDQQAMDRAHRLGQTKQVTVYRLICKGTIEERILQRAREKSEIQRMVISGGNFKPDTLKPKEVVSLLLDDEEIEMKYRQEAKLQSSSPIPAATQSERKRRHPQKDVNMGGTTIAATSATQNPDDDVPSCSSAAKRIKLETEEDFIDVGITSSASSVGTDSNHPTLSQETYVPGATCVQQTEIDSENEALVVDGDSPTMLGQNESMNFLDDLSGISPMRRRHHPRGTRRGRPRGSTRRGGGHGSIPRVLTPTQAATPAVPATASQAAAAGTGAAAGTSSPLPQQEVSGGGDNAGVPLHEEEYRTSPSGQSPGVSCKRGPGRPRSKTATPISRGTRGAPRARRPMGPLLVPLGRSPDDTPPSSSPATSRAPSPLSGSHGAVGPE.

A disordered region spans residues 41–93 (SLRKPLSSDEETDDEHVVKREHDVQDSDDSSTVGVVRMKQSSKRKSRLLASKE). Phosphoserine occurs at positions 47 and 48. A Phosphothreonine modification is found at Thr-52. The span at 55-65 (EHVVKREHDVQ) shows a compositional bias: basic and acidic residues. 2 positions are modified to phosphoserine: Ser-67 and Ser-70. A coiled-coil region spans residues 136 to 161 (VQQLLREHVREQRQRKNYYKKAANAQ). The segment at 201-259 (RLAEAQAGPKPPKQRRRGRKKRDNMGSPESGEVPPSELGKYTFGDTLPNNEDDDEDGGE) is disordered. Residues 212–222 (PKQRRRGRKKR) show a composition bias toward basic residues. 2 positions are modified to phosphoserine: Ser-227 and Ser-230. A compositionally biased stretch (acidic residues) spans 250 to 259 (NEDDDEDGGE). The region spanning 313–438 (IWQIMSKKES…AHFMSKKLGQ (126 aa)) is the DBINO domain. Positions 499–528 (KEKEEEEQAQESVEDIKPEPRPEMKDLPQP) are disordered. Over residues 502-511 (EEEEQAQESV) the composition is skewed to acidic residues. Basic and acidic residues predominate over residues 512–526 (EDIKPEPRPEMKDLP). In terms of domain architecture, Helicase ATP-binding spans 547 to 718 (ANIYDQGISG…WALLHFIMPT (172 aa)). 560 to 567 (DEMGLGKT) contacts ATP. Residues 1160-1315 (VLDNLLTRLK…GGNFKPDTLK (156 aa)) form the Helicase C-terminal domain. Disordered stretches follow at residues 1335 to 1364 (QEAK…DVNM) and 1463 to 1638 (FLDD…VGPE). Positions 1338–1350 (KLQSSSPIPAATQ) are enriched in polar residues. The span at 1473 to 1495 (MRRRHHPRGTRRGRPRGSTRRGG) shows a compositional bias: basic residues. Low complexity-rich tracts occupy residues 1505–1534 (TPTQ…GTSS) and 1618–1627 (SPATSRAPSP).

It belongs to the SNF2/RAD54 helicase family. Component of the chromatin remodeling Ino80 complex.

Its subcellular location is the nucleus. It catalyses the reaction ATP + H2O = ADP + phosphate + H(+). In terms of biological role, ATPase component of the chromatin remodeling INO80 complex which is involved in transcriptional regulation, DNA replication and DNA repair. Binds DNA. As part of the INO80 complex, remodels chromatin by shifting nucleosomes. This chain is Chromatin-remodeling ATPase INO80, found in Drosophila melanogaster (Fruit fly).